A 440-amino-acid chain; its full sequence is Chromosome partition protein MukF (440 aa).

Residues 208–236 (LSETSGTLRELQDTLEAAGDKLQANLLRI) form a leucine-zipper region.

Belongs to the MukF family. As to quaternary structure, interacts, and probably forms a ternary complex, with MukE and MukB via its C-terminal region. The complex formation is stimulated by calcium or magnesium. It is required for an interaction between MukE and MukB.

The protein localises to the cytoplasm. It is found in the nucleoid. Its function is as follows. Involved in chromosome condensation, segregation and cell cycle progression. May participate in facilitating chromosome segregation by condensation DNA from both sides of a centrally located replisome during cell division. Not required for mini-F plasmid partitioning. Probably acts via its interaction with MukB and MukE. Overexpression results in anucleate cells. It has a calcium binding activity. The polypeptide is Chromosome partition protein MukF (Edwardsiella ictaluri (strain 93-146)).